The following is a 186-amino-acid chain: Elongation factor P (186 aa).

It belongs to the elongation factor P family.

It localises to the cytoplasm. Its pathway is protein biosynthesis; polypeptide chain elongation. Involved in peptide bond synthesis. Stimulates efficient translation and peptide-bond synthesis on native or reconstituted 70S ribosomes in vitro. Probably functions indirectly by altering the affinity of the ribosome for aminoacyl-tRNA, thus increasing their reactivity as acceptors for peptidyl transferase. The polypeptide is Elongation factor P (Coprothermobacter proteolyticus (strain ATCC 35245 / DSM 5265 / OCM 4 / BT)).